The chain runs to 520 residues: Fumarate hydratase, mitochondrial (520 aa).

The transit peptide at 1–39 (MASVAHISTAKAIFRAGGLPCRRLITPTLTGLPLKTHRM) directs the protein to the mitochondrion. Residues 153-155 (SGT), 184-187 (HPND), 194-196 (SSN), and T242 contribute to the substrate site. H243 acts as the Proton donor/acceptor in catalysis. S373 is an active-site residue. Residues S374 and 379-381 (KVN) each bind substrate.

Belongs to the class-II fumarase/aspartase family. Fumarase subfamily. As to quaternary structure, homotetramer.

The protein localises to the mitochondrion matrix. It localises to the cytoplasm. The protein resides in the nucleus. The catalysed reaction is (S)-malate = fumarate + H2O. It functions in the pathway carbohydrate metabolism; tricarboxylic acid cycle; (S)-malate from fumarate: step 1/1. In terms of biological role, catalyzes the reversible stereospecific interconversion of fumarate to L-malate. In mitochondrion, catalyzes the hydration of fumarate to L-malate in the tricarboxylic acid (TCA) cycle to facilitate a transition step in the production of energy in the form of NADH. In cytoplasm and nucleus, involved in DNA repair in response to DNA damage: following DNA double-strand breaks (DSBs), translocates from the cytosol to the nucleus and promotes DNA repair by catalyzing the dehydration of L-malate to fumarate. The protein is Fumarate hydratase, mitochondrial (fum1) of Schizosaccharomyces pombe (strain 972 / ATCC 24843) (Fission yeast).